A 490-amino-acid polypeptide reads, in one-letter code: Myocilin (490 aa).

The signal sequence occupies residues 1–18 (MPATQLLLLACLVWGLGA). A glycan (N-linked (GlcNAc...) asparagine) is linked at N43. The stretch at 52 to 169 (QAMSAIQDLQ…SQEVARLRRG (118 aa)) forms a coiled coil. A compositionally biased stretch (basic and acidic residues) spans 146-157 (REENEDLARRLD). A disordered region spans residues 146 to 188 (REENEDLARRLDSSSQEVARLRRGQCPQARGTPQDVPSGSREV). The Olfactomedin-like domain occupies 230–489 (GCGELVWVGE…MVTYDLRLSE (260 aa)). A disulfide bridge links C231 with C419. The Ca(2+) site is built by D366, N414, A415, V463, and D464. The short motif at 488-490 (SEM) is the Microbody targeting signal element.

As to quaternary structure, homodimer (via N-terminus). Can also form higher oligomers. Interacts with OLFM3, FN1, NRCAM, GLDN and NFASC. Interacts (via N-terminus) with MYL2. Interacts with SFRP1, FRZB, FZD7, FZD10, FZD1 and WIF1; regulates Wnt signaling. Interacts with SNTA1; regulates muscle hypertrophy. Interacts with ERBB2 and ERBB3; activates ERBB2-ERBB3 signaling pathway. Interacts with SNCG; affects its secretion and its aggregation. Post-translationally, palmitoylated. Undergoes a calcium-dependent proteolytic cleavage at Arg-212 by CAPN2 in the endoplasmic reticulum. The result is the production of two fragments, one of 35 kDa containing the C-terminal olfactomedin-like domain, and another of 20 kDa containing the N-terminal leucine zipper-like domain. In terms of processing, glycosylated. As to expression, expressed in optic nerve head, ciliary body and retina.

It localises to the secreted. Its subcellular location is the golgi apparatus. The protein localises to the cytoplasmic vesicle. The protein resides in the extracellular space. It is found in the extracellular matrix. It localises to the extracellular exosome. Its subcellular location is the mitochondrion. The protein localises to the mitochondrion intermembrane space. The protein resides in the mitochondrion inner membrane. It is found in the mitochondrion outer membrane. It localises to the rough endoplasmic reticulum. Its subcellular location is the cell projection. The protein localises to the cilium. The protein resides in the endoplasmic reticulum. In terms of biological role, secreted glycoprotein regulating the activation of different signaling pathways in adjacent cells to control different processes including cell adhesion, cell-matrix adhesion, cytoskeleton organization and cell migration. Promotes substrate adhesion, spreading and formation of focal contacts. Negatively regulates cell-matrix adhesion and stress fiber assembly through Rho protein signal transduction. Modulates the organization of actin cytoskeleton by stimulating the formation of stress fibers through interactions with components of Wnt signaling pathways. Promotes cell migration through activation of PTK2 and the downstream phosphatidylinositol 3-kinase signaling. Plays a role in bone formation and promotes osteoblast differentiation in a dose-dependent manner through mitogen-activated protein kinase signaling. Mediates myelination in the peripheral nervous system through ERBB2/ERBB3 signaling. Plays a role as a regulator of muscle hypertrophy through the components of dystrophin-associated protein complex. Involved in positive regulation of mitochondrial depolarization. Plays a role in neurite outgrowth. May participate in the obstruction of fluid outflow in the trabecular meshwork. This chain is Myocilin (MYOC), found in Felis catus (Cat).